The chain runs to 365 residues: MPEITVRAKSKTYPVYINEFALEDIREKWTKSLAKFSHVFVLTDGHVAELHKAKLDAVLADLPVVTYYVAPNGEEAKTFRVYEDVMTKMIETGLDRKAVLIAFGGGVIGDLGGFVAATYMRGIPFYQVPTTVLAHDSAVGGKVAINHPLGKNMIGNFYQPEAVIYDTQFFATLPERELRSGFAEMIKHALISDLTLLRALMDTFTEPKDFYTKDLTPFLQRGIEIKANIVAQDETEQGVRAYLNFGHTFGHALEAYGNFGKWLHGEAITYGMIYALTMSETIYGLDFDLAEFKTWLEQLGYDTTFDASVPFSKILENMRHDKKTTFNEISMVLLEEIGKPVIFKADDDLIFETYKRVMRKGGNVI.

NAD(+)-binding positions include 106-110, 130-131, lysine 142, lysine 151, and 169-172; these read GVIGD, TT, and FFAT. Glutamate 184, histidine 247, and histidine 264 together coordinate Zn(2+).

The protein belongs to the sugar phosphate cyclases superfamily. Dehydroquinate synthase family. NAD(+) is required as a cofactor. Requires Co(2+) as cofactor. Zn(2+) serves as cofactor.

The protein localises to the cytoplasm. It catalyses the reaction 7-phospho-2-dehydro-3-deoxy-D-arabino-heptonate = 3-dehydroquinate + phosphate. Its pathway is metabolic intermediate biosynthesis; chorismate biosynthesis; chorismate from D-erythrose 4-phosphate and phosphoenolpyruvate: step 2/7. Catalyzes the conversion of 3-deoxy-D-arabino-heptulosonate 7-phosphate (DAHP) to dehydroquinate (DHQ). This is 3-dehydroquinate synthase from Listeria monocytogenes serovar 1/2a (strain ATCC BAA-679 / EGD-e).